The following is a 259-amino-acid chain: UPF0739 protein C1orf74 homolog (259 aa).

This sequence belongs to the UPF0739 family.

The chain is UPF0739 protein C1orf74 homolog from Danio rerio (Zebrafish).